The following is a 511-amino-acid chain: 2-isopropylmalate synthase (511 aa).

The 264-residue stretch at 6–269 (IIIFDTTLRD…YTDIKCENIS (264 aa)) folds into the Pyruvate carboxyltransferase domain. Mn(2+) contacts are provided by Asp-15, His-203, His-205, and Asn-239. The segment at 394 to 511 (VLEKLSVISG…SLKVEERKMA (118 aa)) is regulatory domain.

The protein belongs to the alpha-IPM synthase/homocitrate synthase family. LeuA type 1 subfamily. Homodimer. Mn(2+) serves as cofactor.

The protein localises to the cytoplasm. The catalysed reaction is 3-methyl-2-oxobutanoate + acetyl-CoA + H2O = (2S)-2-isopropylmalate + CoA + H(+). Its pathway is amino-acid biosynthesis; L-leucine biosynthesis; L-leucine from 3-methyl-2-oxobutanoate: step 1/4. Its function is as follows. Catalyzes the condensation of the acetyl group of acetyl-CoA with 3-methyl-2-oxobutanoate (2-ketoisovalerate) to form 3-carboxy-3-hydroxy-4-methylpentanoate (2-isopropylmalate). This is 2-isopropylmalate synthase from Campylobacter jejuni subsp. doylei (strain ATCC BAA-1458 / RM4099 / 269.97).